The chain runs to 217 residues: Probable transaldolase (217 aa).

Residue K83 is the Schiff-base intermediate with substrate of the active site.

This sequence belongs to the transaldolase family. Type 3B subfamily.

It is found in the cytoplasm. It carries out the reaction D-sedoheptulose 7-phosphate + D-glyceraldehyde 3-phosphate = D-erythrose 4-phosphate + beta-D-fructose 6-phosphate. It functions in the pathway carbohydrate degradation; pentose phosphate pathway; D-glyceraldehyde 3-phosphate and beta-D-fructose 6-phosphate from D-ribose 5-phosphate and D-xylulose 5-phosphate (non-oxidative stage): step 2/3. In terms of biological role, transaldolase is important for the balance of metabolites in the pentose-phosphate pathway. In Coprothermobacter proteolyticus (strain ATCC 35245 / DSM 5265 / OCM 4 / BT), this protein is Probable transaldolase.